The following is a 556-amino-acid chain: MPVVSFSRREMERLWRSLSEEELTDLLDFTKMNLESFGEEVGFEVTSDRMDLVTLEGIVRCLKGISNEELGLPKYRVRRKAFEVRVGEGVAKVRPYVVAALVRDVDLRTEESLVALIEAQEKIHDTLGRKRRRVAIGLHDFSKVKPPIIYDARRAEEVHFVPLGEYAEMSAKEILEQTEKGKIYSHLIANPENLVPLIMDSREEVLSMPPIINSELTRLTPGVRDIFIDVTGTDLKAIWYALEIISSALAERGGEISTLDILYPDGRNIETPRHEPEEMEVDLDFIRSILGLNLSEDDVVMQLLRARLDAECSDGKVRVLIPGYRSDFLHPIDVAEEVSITLGLNKIGYELPKNVMTVGRPHPVEKVSRKVRTVMIGLGYQEVLNYIMTSRASLFHAVGREEREVVEISNPVSESYSVLRDALFPGLLAFLANNTHVRYPQKVFEIGDVVLIDERLENKTRDERRVAAAYADDSVGFEDIYSHLKVLFENLSYRIELEPRKERPFIEGRCASVLREGEEVGVIGEIDPEVLLNLGITVPVAIFEVALKVPGKEPLT.

Positions 274–349 (HEPEEMEVDL…ITLGLNKIGY (76 aa)) constitute a B5 domain. Mg(2+) contacts are provided by D327, D333, E336, and E337.

Belongs to the phenylalanyl-tRNA synthetase beta subunit family. Type 2 subfamily. As to quaternary structure, tetramer of two alpha and two beta subunits. Mg(2+) is required as a cofactor.

It localises to the cytoplasm. The catalysed reaction is tRNA(Phe) + L-phenylalanine + ATP = L-phenylalanyl-tRNA(Phe) + AMP + diphosphate + H(+). The chain is Phenylalanine--tRNA ligase beta subunit from Korarchaeum cryptofilum (strain OPF8).